Consider the following 319-residue polypeptide: Acetyl-coenzyme A carboxylase carboxyl transferase subunit alpha (319 aa).

A CoA carboxyltransferase C-terminal domain is found at 38-293 (HALQDKLRMR…KAVLLNELDA (256 aa)).

This sequence belongs to the AccA family. As to quaternary structure, acetyl-CoA carboxylase is a heterohexamer composed of biotin carboxyl carrier protein (AccB), biotin carboxylase (AccC) and two subunits each of ACCase subunit alpha (AccA) and ACCase subunit beta (AccD).

It localises to the cytoplasm. It carries out the reaction N(6)-carboxybiotinyl-L-lysyl-[protein] + acetyl-CoA = N(6)-biotinyl-L-lysyl-[protein] + malonyl-CoA. Its pathway is lipid metabolism; malonyl-CoA biosynthesis; malonyl-CoA from acetyl-CoA: step 1/1. Functionally, component of the acetyl coenzyme A carboxylase (ACC) complex. First, biotin carboxylase catalyzes the carboxylation of biotin on its carrier protein (BCCP) and then the CO(2) group is transferred by the carboxyltransferase to acetyl-CoA to form malonyl-CoA. This is Acetyl-coenzyme A carboxylase carboxyl transferase subunit alpha from Stenotrophomonas maltophilia (strain K279a).